Consider the following 234-residue polypeptide: Ubiquinone biosynthesis O-methyltransferase (234 aa).

S-adenosyl-L-methionine is bound by residues Arg-39, Gly-59, Asp-80, and Met-124.

Belongs to the methyltransferase superfamily. UbiG/COQ3 family.

It catalyses the reaction a 3-demethylubiquinol + S-adenosyl-L-methionine = a ubiquinol + S-adenosyl-L-homocysteine + H(+). It carries out the reaction a 3-(all-trans-polyprenyl)benzene-1,2-diol + S-adenosyl-L-methionine = a 2-methoxy-6-(all-trans-polyprenyl)phenol + S-adenosyl-L-homocysteine + H(+). It functions in the pathway cofactor biosynthesis; ubiquinone biosynthesis. In terms of biological role, O-methyltransferase that catalyzes the 2 O-methylation steps in the ubiquinone biosynthetic pathway. The sequence is that of Ubiquinone biosynthesis O-methyltransferase from Aliivibrio fischeri (strain ATCC 700601 / ES114) (Vibrio fischeri).